The sequence spans 513 residues: Cytochrome P450 4p1 (513 aa).

Heme-binding residues include glutamate 320 and cysteine 459.

This sequence belongs to the cytochrome P450 family. The cofactor is heme.

It localises to the endoplasmic reticulum membrane. Its subcellular location is the microsome membrane. Its function is as follows. May be involved in the metabolism of insect hormones and in the breakdown of synthetic insecticides. This Drosophila melanogaster (Fruit fly) protein is Cytochrome P450 4p1 (Cyp4p1).